The following is a 146-amino-acid chain: Hemoglobin subunit beta (146 aa).

One can recognise a Globin domain in the interval 2–146; it reads HWSAEEKQLI…VAHALARKYH (145 aa). 2 residues coordinate heme b: His63 and His92.

The protein belongs to the globin family. In terms of assembly, heterotetramer of two alpha chains and two beta chains. Red blood cells.

In terms of biological role, involved in oxygen transport from the lung to the various peripheral tissues. This is Hemoglobin subunit beta (HBB) from Aptenodytes forsteri (Emperor penguin).